A 99-amino-acid polypeptide reads, in one-letter code: Progonadoliberin-1 (99 aa).

The N-terminal stretch at 1-26 is a signal peptide; sequence MAAQTFALRLLLVGTLLGTLLGQGCC. Q27 bears the Pyrrolidone carboxylic acid mark. G36 carries the post-translational modification Glycine amide.

The protein belongs to the GnRH family.

The protein localises to the secreted. Functionally, stimulates the secretion of gonadotropins. This chain is Progonadoliberin-1 (gnrh1), found in Dicentrarchus labrax (European seabass).